Reading from the N-terminus, the 456-residue chain is Glycerol-3-phosphate dehydrogenase [NAD(+)] At3g07690, cytosolic (456 aa).

NAD(+) is bound by residues 41-46, Lys-189, and Ala-228; that span reads GAGAWG. Lys-189 contributes to the substrate binding site. The Proton acceptor role is filled by Lys-278. 2 residues coordinate NAD(+): Arg-340 and Gln-368. 340–341 is a substrate binding site; it reads RN.

The protein belongs to the NAD-dependent glycerol-3-phosphate dehydrogenase family. Homodimer.

The protein resides in the cytoplasm. The enzyme catalyses sn-glycerol 3-phosphate + NAD(+) = dihydroxyacetone phosphate + NADH + H(+). Required for glycerol-3-phosphate (G3P) accumulation during systemic acquired resistance (SAR) establishment. The polypeptide is Glycerol-3-phosphate dehydrogenase [NAD(+)] At3g07690, cytosolic (Arabidopsis thaliana (Mouse-ear cress)).